A 436-amino-acid polypeptide reads, in one-letter code: Histidinol dehydrogenase (436 aa).

NAD(+) is bound by residues Y130, Q191, and N214. Residues S237, Q259, and H262 each contribute to the substrate site. The Zn(2+) site is built by Q259 and H262. Active-site proton acceptor residues include E327 and H328. The substrate site is built by H328, D361, E415, and H420. D361 contacts Zn(2+). A Zn(2+)-binding site is contributed by H420.

It belongs to the histidinol dehydrogenase family. Zn(2+) serves as cofactor.

The enzyme catalyses L-histidinol + 2 NAD(+) + H2O = L-histidine + 2 NADH + 3 H(+). Its pathway is amino-acid biosynthesis; L-histidine biosynthesis; L-histidine from 5-phospho-alpha-D-ribose 1-diphosphate: step 9/9. Functionally, catalyzes the sequential NAD-dependent oxidations of L-histidinol to L-histidinaldehyde and then to L-histidine. The protein is Histidinol dehydrogenase of Geobacter metallireducens (strain ATCC 53774 / DSM 7210 / GS-15).